The primary structure comprises 456 residues: Methylenetetrahydrofolate--tRNA-(uracil-5-)-methyltransferase TrmFO (456 aa).

9–14 (GGGMAG) lines the FAD pocket.

The protein belongs to the MnmG family. TrmFO subfamily. FAD serves as cofactor.

It is found in the cytoplasm. The catalysed reaction is uridine(54) in tRNA + (6R)-5,10-methylene-5,6,7,8-tetrahydrofolate + NADH + H(+) = 5-methyluridine(54) in tRNA + (6S)-5,6,7,8-tetrahydrofolate + NAD(+). It carries out the reaction uridine(54) in tRNA + (6R)-5,10-methylene-5,6,7,8-tetrahydrofolate + NADPH + H(+) = 5-methyluridine(54) in tRNA + (6S)-5,6,7,8-tetrahydrofolate + NADP(+). In terms of biological role, catalyzes the folate-dependent formation of 5-methyl-uridine at position 54 (M-5-U54) in all tRNAs. The polypeptide is Methylenetetrahydrofolate--tRNA-(uracil-5-)-methyltransferase TrmFO (Novosphingobium aromaticivorans (strain ATCC 700278 / DSM 12444 / CCUG 56034 / CIP 105152 / NBRC 16084 / F199)).